The following is a 221-amino-acid chain: Germin-like protein subfamily 1 member 17 (221 aa).

The signal sequence occupies residues 1 to 21 (MKVSMSLILITLSALVTIAKA). Cysteines 31 and 48 form a disulfide. The Cupin type-1 domain maps to 76–213 (SNVTTVNVDQ…AFQLDVNVVK (138 aa)). An N-linked (GlcNAc...) asparagine glycan is attached at Asn-77. Mn(2+) contacts are provided by His-110, His-112, Glu-117, and His-159.

This sequence belongs to the germin family. As to quaternary structure, oligomer (believed to be a pentamer but probably hexamer).

The protein localises to the secreted. The protein resides in the extracellular space. It localises to the apoplast. In terms of biological role, may play a role in plant defense. Probably has no oxalate oxidase activity even if the active site is conserved. The chain is Germin-like protein subfamily 1 member 17 from Arabidopsis thaliana (Mouse-ear cress).